The chain runs to 497 residues: Galactose-1-phosphate uridylyltransferase (497 aa).

The protein belongs to the galactose-1-phosphate uridylyltransferase type 2 family.

The protein resides in the cytoplasm. The catalysed reaction is alpha-D-galactose 1-phosphate + UDP-alpha-D-glucose = alpha-D-glucose 1-phosphate + UDP-alpha-D-galactose. Its pathway is carbohydrate metabolism; galactose metabolism. This is Galactose-1-phosphate uridylyltransferase from Enterococcus faecalis (strain ATCC 700802 / V583).